Reading from the N-terminus, the 291-residue chain is 4-hydroxy-tetrahydrodipicolinate synthase (291 aa).

Thr-44 is a pyruvate binding site. Catalysis depends on Tyr-132, which acts as the Proton donor/acceptor. Residue Lys-160 is the Schiff-base intermediate with substrate of the active site. Ile-202 contributes to the pyruvate binding site.

It belongs to the DapA family. Homotetramer; dimer of dimers.

Its subcellular location is the cytoplasm. It catalyses the reaction L-aspartate 4-semialdehyde + pyruvate = (2S,4S)-4-hydroxy-2,3,4,5-tetrahydrodipicolinate + H2O + H(+). It participates in amino-acid biosynthesis; L-lysine biosynthesis via DAP pathway; (S)-tetrahydrodipicolinate from L-aspartate: step 3/4. Catalyzes the condensation of (S)-aspartate-beta-semialdehyde [(S)-ASA] and pyruvate to 4-hydroxy-tetrahydrodipicolinate (HTPA). This Roseobacter denitrificans (strain ATCC 33942 / OCh 114) (Erythrobacter sp. (strain OCh 114)) protein is 4-hydroxy-tetrahydrodipicolinate synthase.